We begin with the raw amino-acid sequence, 557 residues long: 2-isopropylmalate synthase (557 aa).

In terms of domain architecture, Pyruvate carboxyltransferase spans 31-304; that stretch reads PTWCSVDLRD…DPGLNFASML (274 aa). The Mg(2+) site is built by Asp-40, His-243, His-245, and Asn-279. Residues 439-557 are regulatory domain; that stretch reads IENPIKFLNF…NTMIKDSAAV (119 aa).

The protein belongs to the alpha-IPM synthase/homocitrate synthase family. LeuA type 2 subfamily. Homodimer. Mg(2+) serves as cofactor.

Its subcellular location is the cytoplasm. It catalyses the reaction 3-methyl-2-oxobutanoate + acetyl-CoA + H2O = (2S)-2-isopropylmalate + CoA + H(+). It functions in the pathway amino-acid biosynthesis; L-leucine biosynthesis; L-leucine from 3-methyl-2-oxobutanoate: step 1/4. In terms of biological role, catalyzes the condensation of the acetyl group of acetyl-CoA with 3-methyl-2-oxobutanoate (2-ketoisovalerate) to form 3-carboxy-3-hydroxy-4-methylpentanoate (2-isopropylmalate). The chain is 2-isopropylmalate synthase from Desulfitobacterium hafniense (strain Y51).